The chain runs to 505 residues: ATP nucleosidase Cap17 (505 aa).

The cyclic oligonucleotide sensing-domain stretch occupies residues 1–229 (MTNTNNEYVL…RLSEIAVELL (229 aa)). Positions 239–505 (LHTPSVLILT…DYLQHGWIRA (267 aa)) are purine nucleoside phosphorylase domain.

This sequence belongs to the Cap17 family.

The enzyme catalyses ATP + H2O = D-ribose 5-triphosphate + adenine. The catalysed reaction is dATP + H2O = 2-deoxyribose 5-triphosphate + adenine. Effector protein with (d)ATP degrading activity of a CBASS antivirus system. CBASS (cyclic oligonucleotide-based antiphage signaling system) provides immunity against bacteriophage. A CD-NTase protein synthesizes cyclic nucleotides in response to infection; these serve as specific second messenger signals. The signals activate a diverse range of effectors, leading to bacterial cell death and thus abortive phage infection. A type III CBASS system. Expression of this CBASS system (Cap18-Cap6-Cap7-CdnC-CapW-Cap17) in a susceptible E.coli (strain MG1655) confers resistance to bacteriophage P1, leading to cell lysis. By 50 minutes post-infection, ATP levels are markedly reduced while dATP has been eliminated. The C-terminal purine nucleoside phosphorylase (PNP) domain cleaves the N-glycosidic bond of (d)ATP to release adenine and a sugar triphosphate; has no activity on other (d)NTPs, nor on DNA or RNA. In vivo during phage infection has pleoitropic effects on nucleotide accumulation. This protein may be activated by the cognate CD-NTase (CdnC). The chain is ATP nucleosidase Cap17 from Escherichia coli (strain KTE188).